The primary structure comprises 318 residues: Replication factor C small subunit (318 aa).

43-50 (GSVGTGKT) is a binding site for ATP.

This sequence belongs to the activator 1 small subunits family. RfcS subfamily. As to quaternary structure, heteromultimer composed of small subunits (RfcS) and large subunits (RfcL).

Functionally, part of the RFC clamp loader complex which loads the PCNA sliding clamp onto DNA. This is Replication factor C small subunit from Thermoplasma volcanium (strain ATCC 51530 / DSM 4299 / JCM 9571 / NBRC 15438 / GSS1).